The sequence spans 300 residues: ADP-polyphosphate phosphotransferase 1 (300 aa).

Belongs to the polyphosphate kinase 2 (PPK2) family. Class I subfamily. Homotetramer. Mg(2+) is required as a cofactor.

It catalyses the reaction [phosphate](n) + ATP = [phosphate](n+1) + ADP. It carries out the reaction [phosphate](n) + GTP = [phosphate](n+1) + GDP. Uses inorganic polyphosphate (polyP) as a donor to convert ADP to ATP. Can also convert GDP to GTP, with lower efficiency. Cannot dephosphorylate ATP in the presence of polyP. This Rhizobium meliloti (strain 1021) (Ensifer meliloti) protein is ADP-polyphosphate phosphotransferase 1.